Here is a 446-residue protein sequence, read N- to C-terminus: FAD-dependent monooxygenase eupB (446 aa).

Residues 10–30 form a helical membrane-spanning segment; that stretch reads EPHIAIVGGGIVGVILTLGLL. A glycan (N-linked (GlcNAc...) asparagine) is linked at asparagine 33. Residues glutamate 40, alanine 53, and arginine 125 each contribute to the FAD site. Active-site residues include arginine 206 and tyrosine 239. N-linked (GlcNAc...) asparagine glycosylation is present at asparagine 243. Residues aspartate 322 and alanine 335 each contribute to the FAD site. Asparagine 395 carries an N-linked (GlcNAc...) asparagine glycan.

It belongs to the paxM FAD-dependent monooxygenase family. Requires FAD as cofactor.

It is found in the membrane. It participates in secondary metabolite biosynthesis; terpenoid biosynthesis. FAD-dependent monooxygenase; part of the gene cluster that mediates the biosynthesis of eupenifeldin, a bistropolone meroterpenoid that acts as an antitumor agent. The first step of eupenifeldin biosynthesis is the biosynthesis of 3-methylorcinaldehyde performed by the non-reducing polyketide synthase eupA. Oxidative dearomatization of 3-methylorcinaldehyde likely catalyzed by the FAD-dependent monooxygenase eupB is followed by oxidative ring expansion by the 2-oxoglutarate-dependent dioxygenase eupC to provide the first tropolone metabolite, tropolone stipitaldehyde. In parallel, generation of sesquiterpene alpha-humulene from farnesylpyrophosphate (FPP) is catalyzed by the terpene cyclase eupE. The cytochrome P450 monooxygenase eupD then hydroxylates humulene to humulenol. The putative Diels-Alderase eupF probably catalyzes the formation of the tropolone-humulene skeleton by linking humulenol and the polyketide moiety. The short-chain dehydrogenase/reductase eupG and the flavin-dependent monooxygenase eupH are also essential for eupenifeldin biosynthesis and are likely the additional decorating enzymes of the tropolone-humulene skeleton to produce final eupenifeldin or derivatives. The chain is FAD-dependent monooxygenase eupB from Phoma sp.